The chain runs to 156 residues: uncharacterized protein (156 aa).

Positions 1 to 18 are cleaved as a signal peptide; the sequence is MKKLLSIFLMAFSLNAFA. The 138-residue stretch at 19-156 folds into the Thioredoxin domain; it reads QTNLADVQLK…AEQIRVFAEK (138 aa). Residues C54 and C57 are joined by a disulfide bond.

Belongs to the thioredoxin family.

This is an uncharacterized protein from Haemophilus influenzae (strain ATCC 51907 / DSM 11121 / KW20 / Rd).